A 351-amino-acid polypeptide reads, in one-letter code: MNDTIASTVRLTQYSHGAGCGCKISPKVLEKILHSDMEKWVDPHLLVGNETKDDAAVYDIGNGIGIISTTDFFMPIVDDPFDFGRIAATNAISDIFAMGGKPIMAIAILGFPIKLLPPEVAQRIVDGGRFACRQAGITLAGGHSIDAPEPIFGLAVTGIINTDKVKKNASATAGCKLFLTKPLGIGVLTTAEKKGKLKAEHQGLATEVMCQMNTIGAKFAEIAGISAMTDVTGFGLLGHLSELCEGSGVRAEVYFDKIKTLDGVQRYIEKGCIPGGTERNFESYGHKIGAMSDLQKAILCDPQTSGGLLIAVDADSEQQVLEIAADDSIELFEVGRLFAKEHDSPILITVL.

Residue Cys-20 is part of the active site. Residues Lys-23 and 51–53 (TKD) each bind ATP. Asp-54 lines the Mg(2+) pocket. Residues Asp-71, Asp-94, and 142–144 (GHS) contribute to the ATP site. Asp-94 contributes to the Mg(2+) binding site. Residue Asp-230 participates in Mg(2+) binding.

Belongs to the selenophosphate synthase 1 family. Class I subfamily. Homodimer. It depends on Mg(2+) as a cofactor.

The catalysed reaction is hydrogenselenide + ATP + H2O = selenophosphate + AMP + phosphate + 2 H(+). Its function is as follows. Synthesizes selenophosphate from selenide and ATP. The protein is Selenide, water dikinase of Pasteurella multocida (strain Pm70).